A 554-amino-acid polypeptide reads, in one-letter code: Chaperonin GroEL (554 aa).

ATP contacts are provided by residues 30-33 (TLGP), Lys51, 87-91 (DGTTT), Gly415, 479-481 (NAA), and Asp495.

Belongs to the chaperonin (HSP60) family. In terms of assembly, forms a cylinder of 14 subunits composed of two heptameric rings stacked back-to-back. Interacts with the co-chaperonin GroES.

Its subcellular location is the cytoplasm. The enzyme catalyses ATP + H2O + a folded polypeptide = ADP + phosphate + an unfolded polypeptide.. In terms of biological role, together with its co-chaperonin GroES, plays an essential role in assisting protein folding. The GroEL-GroES system forms a nano-cage that allows encapsulation of the non-native substrate proteins and provides a physical environment optimized to promote and accelerate protein folding. This chain is Chaperonin GroEL, found in Nitrosococcus oceani (strain ATCC 19707 / BCRC 17464 / JCM 30415 / NCIMB 11848 / C-107).